Here is a 740-residue protein sequence, read N- to C-terminus: NAD(P)H-quinone oxidoreductase subunit 5, chloroplastic (740 aa).

A run of 16 helical transmembrane segments spans residues 9 to 29, 40 to 60, 89 to 109, 125 to 145, 147 to 167, 185 to 205, 221 to 241, 258 to 278, 283 to 303, 327 to 347, 354 to 374, 396 to 416, 425 to 445, 547 to 567, 606 to 626, and 718 to 738; these read WIIP…LLLF, WSFL…YLSI, IDPL…LVLI, FAYM…SNLI, IYFF…FWFT, GDFG…SFEF, VNLL…IAKS, TPIS…FLVA, LFIV…ITIL, LGYM…FHLI, ALLF…VGYS, TAFL…CFWS, LLFS…TAFY, ILFP…IGIP, FSVS…KPFY, and ISSY…FLKI.

This sequence belongs to the complex I subunit 5 family. As to quaternary structure, NDH is composed of at least 16 different subunits, 5 of which are encoded in the nucleus.

It localises to the plastid. The protein resides in the chloroplast thylakoid membrane. It catalyses the reaction a plastoquinone + NADH + (n+1) H(+)(in) = a plastoquinol + NAD(+) + n H(+)(out). The enzyme catalyses a plastoquinone + NADPH + (n+1) H(+)(in) = a plastoquinol + NADP(+) + n H(+)(out). In terms of biological role, NDH shuttles electrons from NAD(P)H:plastoquinone, via FMN and iron-sulfur (Fe-S) centers, to quinones in the photosynthetic chain and possibly in a chloroplast respiratory chain. The immediate electron acceptor for the enzyme in this species is believed to be plastoquinone. Couples the redox reaction to proton translocation, and thus conserves the redox energy in a proton gradient. This is NAD(P)H-quinone oxidoreductase subunit 5, chloroplastic (ndhF) from Aethionema cordifolium (Lebanon stonecress).